The chain runs to 604 residues: Glutamine--fructose-6-phosphate aminotransferase [isomerizing] (604 aa).

The active-site Nucleophile; for GATase activity is the Cys-2. A Glutamine amidotransferase type-2 domain is found at 2-216; it reads CGIVGYVGFR…DGDVVRLTRE (215 aa). 2 SIS domains span residues 281–420 and 453–594; these read LALD…GRGA and VAEK…VDQP. Lys-599 acts as the For Fru-6P isomerization activity in catalysis.

Homodimer.

It is found in the cytoplasm. The enzyme catalyses D-fructose 6-phosphate + L-glutamine = D-glucosamine 6-phosphate + L-glutamate. In terms of biological role, catalyzes the first step in hexosamine metabolism, converting fructose-6P into glucosamine-6P using glutamine as a nitrogen source. This is Glutamine--fructose-6-phosphate aminotransferase [isomerizing] from Thermus thermophilus (strain ATCC 27634 / DSM 579 / HB8).